The chain runs to 116 residues: Ribonuclease P protein component (116 aa).

Belongs to the RnpA family. In terms of assembly, consists of a catalytic RNA component (M1 or rnpB) and a protein subunit.

It carries out the reaction Endonucleolytic cleavage of RNA, removing 5'-extranucleotides from tRNA precursor.. Its function is as follows. RNaseP catalyzes the removal of the 5'-leader sequence from pre-tRNA to produce the mature 5'-terminus. It can also cleave other RNA substrates such as 4.5S RNA. The protein component plays an auxiliary but essential role in vivo by binding to the 5'-leader sequence and broadening the substrate specificity of the ribozyme. This Geobacillus sp. (strain WCH70) protein is Ribonuclease P protein component.